A 315-amino-acid polypeptide reads, in one-letter code: Olfactory receptor 3A2 (315 aa).

At 1 to 29 (MEPEAGTNRTAVAEFILLGLVQTEEMQPV) the chain is on the extracellular side. An N-linked (GlcNAc...) asparagine glycan is attached at N8. The helical transmembrane segment at 30-52 (VFVLFLFAYLVTIGGNLSILAAI) threads the bilayer. The Cytoplasmic portion of the chain corresponds to 53 to 60 (LVEPKLHA). The helical transmembrane segment at 61–82 (PMYFFLGNLSVLDVGCITVTVP) threads the bilayer. Over 83 to 103 (AMLGRLLSHKSTISYDACLSQ) the chain is Extracellular. C100 and C192 form a disulfide bridge. A helical transmembrane segment spans residues 104-123 (LFFFHLLAGMDCFLLTAMAY). At 124–143 (DRFLAICWPLTYSTRMSQTV) the chain is on the cytoplasmic side. Residues 144–161 (QRMLVAASWACAFTNALT) form a helical membrane-spanning segment. Residues 162-199 (HTVAMSTLNFCGPNEVNHFYCDLPQLFQLSCSSTQLNE) are Extracellular-facing. The helical transmembrane segment at 200–223 (LLLFAVGFIMAGTPLVLIITSYSH) threads the bilayer. At 224-240 (VAAAVLRIRSVEGWKKA) the chain is on the cytoplasmic side. Residues 241–264 (FSTCGSHLTVVCLFFGTGIFNYMR) traverse the membrane as a helical segment. Residues 265 to 275 (LGSEEASDKDK) lie on the Extracellular side of the membrane. The chain crosses the membrane as a helical span at residues 276–295 (GVGVFNTVINPMLNPLIYSL). Topologically, residues 296–315 (RNPDVQGALWRIFLGRRSLT) are cytoplasmic.

This sequence belongs to the G-protein coupled receptor 1 family.

The protein localises to the cell membrane. Odorant receptor. This Pan troglodytes (Chimpanzee) protein is Olfactory receptor 3A2 (OR3A2).